A 472-amino-acid chain; its full sequence is Argininosuccinate lyase (472 aa).

It belongs to the lyase 1 family. Argininosuccinate lyase subfamily.

The protein resides in the cytoplasm. It catalyses the reaction 2-(N(omega)-L-arginino)succinate = fumarate + L-arginine. It functions in the pathway amino-acid biosynthesis; L-arginine biosynthesis; L-arginine from L-ornithine and carbamoyl phosphate: step 3/3. This is Argininosuccinate lyase from Mycolicibacterium paratuberculosis (strain ATCC BAA-968 / K-10) (Mycobacterium paratuberculosis).